We begin with the raw amino-acid sequence, 668 residues long: S-adenosyl-L-methionine-dependent tRNA 4-demethylwyosine synthase TYW1B (668 aa).

Residues 37–191 (CVQIVIEMQG…NFRAWKTKFI (155 aa)) form the Flavodoxin-like domain. FMN contacts are provided by residues 43–47 (EMQGF) and 130–162 (VFGL…HRVM). The interval 202–269 (RKKSCGGHCK…QSLNSIVDVE (68 aa)) is disordered. Composition is skewed to basic and acidic residues over residues 213-223 (GKCESHQHGSE) and 233-243 (DELHHRDTKEE). Residues 244–255 (EPFESSSEEEFG) show a composition bias toward acidic residues. In terms of domain architecture, Radical SAM core spans 336–580 (LWNESHRCME…VDLIPEYEIA (245 aa)). C352, C356, and C359 together coordinate [4Fe-4S] cluster.

It belongs to the TYW1 family. It depends on [4Fe-4S] cluster as a cofactor.

The enzyme catalyses N(1)-methylguanosine(37) in tRNA(Phe) + pyruvate + S-adenosyl-L-methionine = 4-demethylwyosine(37) in tRNA(Phe) + 5'-deoxyadenosine + L-methionine + CO2 + H2O. Its pathway is tRNA modification; wybutosine-tRNA(Phe) biosynthesis. Functionally, probable component of the wybutosine biosynthesis pathway. Wybutosine is a hyper modified guanosine with a tricyclic base found at the 3'-position adjacent to the anticodon of eukaryotic phenylalanine tRNA. Catalyzes the condensation of N-methylguanine with 2 carbon atoms from pyruvate to form the tricyclic 4-demethylwyosine, an intermediate in wybutosine biosynthesis. The polypeptide is S-adenosyl-L-methionine-dependent tRNA 4-demethylwyosine synthase TYW1B (TYW1B) (Homo sapiens (Human)).